A 489-amino-acid polypeptide reads, in one-letter code: Ribulose bisphosphate carboxylase large chain (489 aa).

Substrate is bound by residues Asn128 and Thr178. The Proton acceptor role is filled by Lys180. Lys182 contributes to the substrate binding site. Positions 206, 208, and 209 each coordinate Mg(2+). The residue at position 206 (Lys206) is an N6-carboxylysine. Catalysis depends on His298, which acts as the Proton acceptor. Positions 299, 331, and 383 each coordinate substrate.

The protein belongs to the RuBisCO large chain family. Type I subfamily. As to quaternary structure, heterohexadecamer of 8 large chains and 8 small chains. Requires Mg(2+) as cofactor.

The catalysed reaction is 2 (2R)-3-phosphoglycerate + 2 H(+) = D-ribulose 1,5-bisphosphate + CO2 + H2O. The enzyme catalyses D-ribulose 1,5-bisphosphate + O2 = 2-phosphoglycolate + (2R)-3-phosphoglycerate + 2 H(+). Functionally, ruBisCO catalyzes two reactions: the carboxylation of D-ribulose 1,5-bisphosphate, the primary event in carbon dioxide fixation, as well as the oxidative fragmentation of the pentose substrate. Both reactions occur simultaneously and in competition at the same active site. The protein is Ribulose bisphosphate carboxylase large chain of Nitrosospira sp. (strain 40KI).